The primary structure comprises 39 residues: Photosystem II reaction center protein L (39 aa).

Residues 18 to 38 (SLYLGLLVVFTTGILFSSYFF) form a helical membrane-spanning segment.

Belongs to the PsbL family. As to quaternary structure, PSII is composed of 1 copy each of membrane proteins PsbA, PsbB, PsbC, PsbD, PsbE, PsbF, PsbH, PsbI, PsbJ, PsbK, PsbL, PsbM, PsbT, PsbX, PsbY, PsbZ, Psb30/Ycf12, peripheral proteins PsbO, CyanoQ (PsbQ), PsbU, PsbV and a large number of cofactors. It forms dimeric complexes.

The protein localises to the cellular thylakoid membrane. In terms of biological role, one of the components of the core complex of photosystem II (PSII). PSII is a light-driven water:plastoquinone oxidoreductase that uses light energy to abstract electrons from H(2)O, generating O(2) and a proton gradient subsequently used for ATP formation. It consists of a core antenna complex that captures photons, and an electron transfer chain that converts photonic excitation into a charge separation. This subunit is found at the monomer-monomer interface and is required for correct PSII assembly and/or dimerization. The protein is Photosystem II reaction center protein L of Synechococcus sp. (strain WH7803).